A 106-amino-acid chain; its full sequence is Large ribosomal subunit protein uL24 (106 aa).

A compositionally biased stretch (basic and acidic residues) spans 84-97; the sequence is EKIGRELGAKEKAR. The interval 84 to 106 is disordered; that stretch reads EKIGRELGAKEKARLQKRKAAAK.

Belongs to the universal ribosomal protein uL24 family. In terms of assembly, part of the 50S ribosomal subunit.

Functionally, one of two assembly initiator proteins, it binds directly to the 5'-end of the 23S rRNA, where it nucleates assembly of the 50S subunit. In terms of biological role, one of the proteins that surrounds the polypeptide exit tunnel on the outside of the subunit. This chain is Large ribosomal subunit protein uL24, found in Anaeromyxobacter dehalogenans (strain 2CP-C).